The chain runs to 269 residues: GTP cyclohydrolase FolE2 (269 aa).

It belongs to the GTP cyclohydrolase IV family.

It carries out the reaction GTP + H2O = 7,8-dihydroneopterin 3'-triphosphate + formate + H(+). Its pathway is cofactor biosynthesis; 7,8-dihydroneopterin triphosphate biosynthesis; 7,8-dihydroneopterin triphosphate from GTP: step 1/1. Its function is as follows. Converts GTP to 7,8-dihydroneopterin triphosphate. The polypeptide is GTP cyclohydrolase FolE2 (Azoarcus sp. (strain BH72)).